The sequence spans 364 residues: Guanine nucleotide-binding protein alpha-6 subunit (364 aa).

The disordered stretch occupies residues 1–29; sequence MGAGATGLRGARLSPEERANSSKSRAIDR. Residue G2 is the site of N-myristoyl glycine attachment. The segment covering 14-29 has biased composition (basic and acidic residues); sequence SPEERANSSKSRAIDR. A G-alpha domain is found at 40-363; sequence NRFKILLLGT…NENLRSAGLH (324 aa). The G1 motif stretch occupies residues 43–56; that stretch reads KILLLGTAESGKST. GTP is bound by residues 48-55, 186-192, 211-215, 280-283, and A335; these read GTAESGKS, VHCRIST, DVGGQ, and NKYD. 2 residues coordinate Mg(2+): S55 and T192. The interval 184-192 is G2 motif; that stretch reads DIVHCRIST. Residues 207 to 216 are G3 motif; that stretch reads FKMVDVGGQR. The interval 276-283 is G4 motif; that stretch reads VLFLNKYD. Residues 333–338 form a G5 motif region; that stretch reads TTATDT.

Belongs to the G-alpha family. G proteins are composed of 3 units; alpha, beta and gamma. The alpha chain contains the guanine nucleotide binding site.

Functionally, guanine nucleotide-binding proteins (G proteins) are involved as modulators or transducers in various transmembrane signaling systems. The sequence is that of Guanine nucleotide-binding protein alpha-6 subunit (gpa-6) from Caenorhabditis elegans.